Reading from the N-terminus, the 82-residue chain is Toxin NaTx-13 (82 aa).

Positions 6–70 (PGGYPVNQFK…KNSIEVFSCG (65 aa)) constitute an LCN-type CS-alpha/beta domain. 4 cysteine pairs are disulfide-bonded: Cys-16-Cys-69, Cys-20-Cys-44, Cys-30-Cys-49, and Cys-34-Cys-51.

It belongs to the long (4 C-C) scorpion toxin superfamily. Sodium channel inhibitor family. As to expression, expressed by the venom gland.

The protein localises to the secreted. Its function is as follows. Probable sodium channel inhibitor. This Centruroides sculpturatus (Arizona bark scorpion) protein is Toxin NaTx-13.